The sequence spans 162 residues: Large ribosomal subunit protein uL10 (162 aa).

Belongs to the universal ribosomal protein uL10 family. In terms of assembly, part of the ribosomal stalk of the 50S ribosomal subunit. The N-terminus interacts with L11 and the large rRNA to form the base of the stalk. The C-terminus forms an elongated spine to which L12 dimers bind in a sequential fashion forming a multimeric L10(L12)X complex.

Functionally, forms part of the ribosomal stalk, playing a central role in the interaction of the ribosome with GTP-bound translation factors. This chain is Large ribosomal subunit protein uL10 (rplJ), found in Mycoplasma genitalium (strain ATCC 33530 / DSM 19775 / NCTC 10195 / G37) (Mycoplasmoides genitalium).